A 140-amino-acid polypeptide reads, in one-letter code: L-fucose mutarotase (140 aa).

H22 acts as the Proton donor in catalysis. Substrate is bound by residues D30, R107, and 129-131 (YGN).

This sequence belongs to the RbsD / FucU family. FucU mutarotase subfamily. In terms of assembly, homodecamer.

It is found in the cytoplasm. It carries out the reaction alpha-L-fucose = beta-L-fucose. It functions in the pathway carbohydrate metabolism; L-fucose metabolism. In terms of biological role, involved in the anomeric conversion of L-fucose. This is L-fucose mutarotase from Salmonella arizonae (strain ATCC BAA-731 / CDC346-86 / RSK2980).